The following is a 153-amino-acid chain: Large ribosomal subunit protein uL22 (153 aa).

The segment at 125 to 153 is disordered; sequence EPKEARQARKKAKSGRPAAAAKSETEKGA.

This sequence belongs to the universal ribosomal protein uL22 family. Part of the 50S ribosomal subunit.

This protein binds specifically to 23S rRNA; its binding is stimulated by other ribosomal proteins, e.g. L4, L17, and L20. It is important during the early stages of 50S assembly. It makes multiple contacts with different domains of the 23S rRNA in the assembled 50S subunit and ribosome. Functionally, the globular domain of the protein is located near the polypeptide exit tunnel on the outside of the subunit, while an extended beta-hairpin is found that lines the wall of the exit tunnel in the center of the 70S ribosome. This Cutibacterium acnes (strain DSM 16379 / KPA171202) (Propionibacterium acnes) protein is Large ribosomal subunit protein uL22.